Reading from the N-terminus, the 828-residue chain is Periplasmic nitrate reductase (828 aa).

The segment at residues 1 to 31 is a signal peptide (tat-type signal); the sequence is MKLSRRSFMKANAVAAAAAAAGLSVPGVARA. Residues 39 to 95 form the 4Fe-4S Mo/W bis-MGD-type domain; sequence IKWDKAPCRFCGTGCGVLVGTQQGRVVACQGDPDAPVNRGLNCIKGYFLPKIMYGKD. Residues Cys-46, Cys-49, Cys-53, and Cys-81 each contribute to the [4Fe-4S] cluster site. Residues Lys-83, Gln-150, Asn-175, Cys-179, 212-219, 243-247, 262-264, Met-372, Gln-376, Asn-482, 508-509, Lys-531, Asp-558, and 718-727 contribute to the Mo-bis(molybdopterin guanine dinucleotide) site; these read WGSNMAEM, STFQH, QSD, SD, and TGRVLEHWHT. Residue Phe-794 coordinates substrate. Mo-bis(molybdopterin guanine dinucleotide) contacts are provided by Asn-802 and Lys-819.

This sequence belongs to the prokaryotic molybdopterin-containing oxidoreductase family. NasA/NapA/NarB subfamily. As to quaternary structure, component of the periplasmic nitrate reductase NapAB complex composed of NapA and NapB. It depends on [4Fe-4S] cluster as a cofactor. Requires Mo-bis(molybdopterin guanine dinucleotide) as cofactor. In terms of processing, predicted to be exported by the Tat system. The position of the signal peptide cleavage has not been experimentally proven.

It localises to the periplasm. It catalyses the reaction 2 Fe(II)-[cytochrome] + nitrate + 2 H(+) = 2 Fe(III)-[cytochrome] + nitrite + H2O. In terms of biological role, catalytic subunit of the periplasmic nitrate reductase complex NapAB. Receives electrons from NapB and catalyzes the reduction of nitrate to nitrite. The chain is Periplasmic nitrate reductase from Salmonella agona (strain SL483).